The chain runs to 662 residues: Acetyl-coenzyme A synthetase (662 aa).

CoA is bound by residues 197–200 (RKGK) and Thr317. ATP contacts are provided by residues 393 to 395 (GEP), 417 to 422 (DTWWQT), Asp510, and Arg525. Ser533 contacts CoA. Residue Arg536 coordinates ATP. 2 residues coordinate Mg(2+): His549 and Val552. Lys623 carries the N6-acetyllysine modification.

The protein belongs to the ATP-dependent AMP-binding enzyme family. Mg(2+) serves as cofactor. Acetylated. Deacetylation by the SIR2-homolog deacetylase activates the enzyme.

It carries out the reaction acetate + ATP + CoA = acetyl-CoA + AMP + diphosphate. Catalyzes the conversion of acetate into acetyl-CoA (AcCoA), an essential intermediate at the junction of anabolic and catabolic pathways. AcsA undergoes a two-step reaction. In the first half reaction, AcsA combines acetate with ATP to form acetyl-adenylate (AcAMP) intermediate. In the second half reaction, it can then transfer the acetyl group from AcAMP to the sulfhydryl group of CoA, forming the product AcCoA. This is Acetyl-coenzyme A synthetase from Helicobacter pylori (strain G27).